A 258-amino-acid polypeptide reads, in one-letter code: Acyl-[acyl-carrier-protein]--UDP-N-acetylglucosamine O-acyltransferase (258 aa).

Belongs to the transferase hexapeptide repeat family. LpxA subfamily. As to quaternary structure, homotrimer.

Its subcellular location is the cytoplasm. It carries out the reaction a (3R)-hydroxyacyl-[ACP] + UDP-N-acetyl-alpha-D-glucosamine = a UDP-3-O-[(3R)-3-hydroxyacyl]-N-acetyl-alpha-D-glucosamine + holo-[ACP]. The protein operates within glycolipid biosynthesis; lipid IV(A) biosynthesis; lipid IV(A) from (3R)-3-hydroxytetradecanoyl-[acyl-carrier-protein] and UDP-N-acetyl-alpha-D-glucosamine: step 1/6. Involved in the biosynthesis of lipid A, a phosphorylated glycolipid that anchors the lipopolysaccharide to the outer membrane of the cell. The polypeptide is Acyl-[acyl-carrier-protein]--UDP-N-acetylglucosamine O-acyltransferase (Stutzerimonas stutzeri (strain A1501) (Pseudomonas stutzeri)).